Consider the following 246-residue polypeptide: 4-hydroxy-tetrahydrodipicolinate reductase (246 aa).

7 to 12 lines the NAD(+) pocket; sequence GCSGRM. Residue R34 coordinates NADP(+). NAD(+)-binding positions include 76–78 and 102–105; these read ATT and CPNT. The active-site Proton donor/acceptor is the H135. (S)-2,3,4,5-tetrahydrodipicolinate is bound at residue H136. K139 serves as the catalytic Proton donor. Position 145 to 146 (145 to 146) interacts with (S)-2,3,4,5-tetrahydrodipicolinate; sequence GT.

It belongs to the DapB family.

It is found in the cytoplasm. It catalyses the reaction (S)-2,3,4,5-tetrahydrodipicolinate + NAD(+) + H2O = (2S,4S)-4-hydroxy-2,3,4,5-tetrahydrodipicolinate + NADH + H(+). It carries out the reaction (S)-2,3,4,5-tetrahydrodipicolinate + NADP(+) + H2O = (2S,4S)-4-hydroxy-2,3,4,5-tetrahydrodipicolinate + NADPH + H(+). It functions in the pathway amino-acid biosynthesis; L-lysine biosynthesis via DAP pathway; (S)-tetrahydrodipicolinate from L-aspartate: step 4/4. Catalyzes the conversion of 4-hydroxy-tetrahydrodipicolinate (HTPA) to tetrahydrodipicolinate. This is 4-hydroxy-tetrahydrodipicolinate reductase from Chlamydia abortus (strain DSM 27085 / S26/3) (Chlamydophila abortus).